The sequence spans 226 residues: Tyramine N-feruloyltransferase 4/11 (226 aa).

Residues 29–45 (HIYKLFYQIHEYHNYTH) are important in binding site and for catalytic activity. The 151-residue stretch at 72-222 (VLLLEVSPTP…VGDALQKYAD (151 aa)) folds into the N-acetyltransferase domain.

It belongs to the acetyltransferase family. As to quaternary structure, homodimer.

The protein localises to the cytoplasm. The catalysed reaction is tyramine + (E)-feruloyl-CoA = N-[(E)-feruloyl]tyramine + CoA + H(+). Inhibited by (2-hydroxyphenyl)amino sulfinyl acetic acid 1,1-dimethylethyl ester, by DEPC and by N-ethylmaleimide. Functionally, synthesizes amides which are involved in stress response in the cell wall. Catalyzes the synthesis of hydroxycinnamic acid amides from hydroxycinnamoyl-CoA thioesters and various hydroxyphenylethylamines such as 4-coumaroyl-CoA and sinapoyl-CoA. The polypeptide is Tyramine N-feruloyltransferase 4/11 (THT4) (Nicotiana tabacum (Common tobacco)).